The following is a 72-amino-acid chain: Cytochrome b-c1 complex subunit 9 (72 aa).

Residues 1–27 (MESAARRSGGGVLEGFYRLVMRRTPVY) lie on the Mitochondrial matrix side of the membrane. The helical transmembrane segment at 28 to 53 (VTFVIAGALLGERAVDYGVKTLWEKN) threads the bilayer. Over 54–72 (NVGKRYEDISVLGQRPVDE) the chain is Mitochondrial intermembrane.

The protein belongs to the UQCR10/QCR9 family. As to quaternary structure, component of the ubiquinol-cytochrome c oxidoreductase (cytochrome b-c1 complex, complex III, CIII), a multisubunit enzyme composed of 3 respiratory subunits cytochrome b, cytochrome c1 and Rieske protein, 2 core protein subunits, and additional low-molecular weight protein subunits. The complex exists as an obligatory dimer and forms supercomplexes (SCs) in the inner mitochondrial membrane with cytochrome c oxidase (complex IV, CIV).

The protein resides in the mitochondrion inner membrane. Functionally, component of the ubiquinol-cytochrome c oxidoreductase, a multisubunit transmembrane complex that is part of the mitochondrial electron transport chain which drives oxidative phosphorylation. The respiratory chain contains 3 multisubunit complexes succinate dehydrogenase (complex II, CII), ubiquinol-cytochrome c oxidoreductase (cytochrome b-c1 complex, complex III, CIII) and cytochrome c oxidase (complex IV, CIV), that cooperate to transfer electrons derived from NADH and succinate to molecular oxygen, creating an electrochemical gradient over the inner membrane that drives transmembrane transport and the ATP synthase. The cytochrome b-c1 complex catalyzes electron transfer from ubiquinol to cytochrome c, linking this redox reaction to translocation of protons across the mitochondrial inner membrane, with protons being carried across the membrane as hydrogens on the quinol. In the process called Q cycle, 2 protons are consumed from the matrix, 4 protons are released into the intermembrane space and 2 electrons are passed to cytochrome c. In Solanum tuberosum (Potato), this protein is Cytochrome b-c1 complex subunit 9.